The primary structure comprises 1019 residues: MSYGWYHGNITRSKAEDLLSQAGKDGSYLVRDSESVCRAYALCVLNQNCVHTYRILQNAEHQLSVQASEGVPMRFFTNLVELIEFYRRENVGLVTHLQYPIEKEEEGPEEPDEEQEPAPPNVPPRNFAFTPPSETKECQTAIERAPAANASLLLSETLLQRFQDTDSRCIPEEHLQAICDYFSLHIVSDCDMVRTGSQTLPQFKKLLMTLCTGLHRELTRTLPTLESLQVAIDPQLSPGFKQRSPLPGDSATNNMVNKLTHLTSMVSNLEEKVKTVLMEGAAVKHRRSLIPPIIFEVKADSIGISQKTHLKVDVETGKLIIKKSKDGPDDKFYPSKKILQLIKSQKFPHKLVIVLETEKEKTQRKEYVFADSKKREGFCQLLQQMKNKHSGQSEPDMLSIFIGTWNMGDAPPPKNITPWFQCKGQGKTRDDTADYIEHDIYVIGTQEDPLSEKEWTDTLIHSLREITSVEYKVITTQTLWNIRIVVLAKPEHAHRISHVCTNSVKTGIANTLGNKGAVGASFMFNGTSFGFINSHLTSGSEKKLRRNQNYFNILRFLVLGDKKLSPFNFTHRFNHLFWLGDLNYRLQLPNTEAENIIQKIKQQQHQELLPHDQLNLERRESLIFFQFHEEEITFPPTYRYERGSRERYCYTKQKATGIKYNLPSWCDRILWKSYPQMHILCQSYGCTDDITTSDHSPVFGTFQVGVTSQFVSKNNPGDSGDLEAQGHIELMNCKATLYTKSHTKFYIEFHSPCLENMVKSSEAEDQEGNNGTLVVKFGVLPKLTPIISDLEYLLDQHLLICIKSSDTDESYGEGCIALRKEDTEQQFPFCTILTHHGEETGLFCGEICLPASGGKQREKLYDFVKIEKDETVAQKQLKHPYSQSMEQSRIMKSISEKSAMIARMRAAPETQNSMDHTASVAAISSQAKQSPPTTPPGFRGSEPRQKPGSPVQGRGDTPITSPPRTTLSTQKFSHSNTNRTAPAARPQDSLQITVPSDPHEMVDNPLYGPVNNTLYPPTA.

One can recognise an SH2 domain in the interval 5-101 (WYHGNITRSK…GLVTHLQYPI (97 aa)). Acidic residues predominate over residues 103–116 (KEEEGPEEPDEEQE). 2 disordered regions span residues 103–133 (KEEE…TPPS) and 909–1019 (ETQN…PPTA). The SH3-binding 1 signature appears at 120–125 (PNVPPR). Composition is skewed to polar residues over residues 909–931 (ETQN…KQSP) and 958–980 (PITS…TNRT). The short motif at 966–971 (TLSTQK) is the SH3-binding 2 element. Residues 1004 to 1007 (NPLY) carry the NPXY motif motif. A Phosphotyrosine modification is found at Y1007. A compositionally biased stretch (polar residues) spans 1010-1019 (VNNTLYPPTA).

The protein belongs to the inositol 1,4,5-trisphosphate 5-phosphatase family. In terms of processing, tyrosine phosphorylated by the members of the SRC family after exposure to a diverse array of extracellular stimuli.

Its subcellular location is the cytoplasm. It localises to the cell membrane. The protein localises to the membrane raft. The protein resides in the cytoskeleton. It catalyses the reaction a 1,2-diacyl-sn-glycero-3-phospho-(1D-myo-inositol-3,4,5-trisphosphate) + H2O = a 1,2-diacyl-sn-glycero-3-phospho-(1D-myo-inositol-3,4-bisphosphate) + phosphate. It carries out the reaction 1D-myo-inositol 1,3,4,5-tetrakisphosphate + H2O = 1D-myo-inositol 1,3,4-trisphosphate + phosphate. The catalysed reaction is a 1,2-diacyl-sn-glycero-3-phospho-(1D-myo-inositol-4,5-bisphosphate) + H2O = a 1,2-diacyl-sn-glycero-3-phospho-(1D-myo-inositol 4-phosphate) + phosphate. Functionally, phosphatidylinositol (PtdIns) phosphatase that specifically hydrolyzes the 5-phosphate of phosphatidylinositol-3,4,5-trisphosphate (PtdIns(3,4,5)P3) to produce PtdIns(3,4)P2, thereby negatively regulating the PI3K (phosphoinositide 3-kinase) pathways. Able also to hydrolyzes the 5-phosphate of phosphatidylinositol-4,5-bisphosphate (PtdIns(4,5)P3) and inositol 1,3,4,5-tetrakisphosphate. Acts as a negative regulator of B-cell antigen receptor signaling. Mediates signaling from the FC-gamma-RIIB receptor (FCGR2B), playing a central role in terminating signal transduction from activating immune/hematopoietic cell receptor systems. Acts as a negative regulator of myeloid cell proliferation/survival and chemotaxis, mast cell degranulation, immune cells homeostasis, integrin alpha-IIb/beta-3 signaling in platelets and JNK signaling in B-cells. The polypeptide is Phosphatidylinositol 3,4,5-trisphosphate 5-phosphatase 1 (inpp5d) (Xenopus laevis (African clawed frog)).